Consider the following 160-residue polypeptide: Nucleotide-binding protein CBU_0114 (160 aa).

This sequence belongs to the YajQ family.

In terms of biological role, nucleotide-binding protein. The sequence is that of Nucleotide-binding protein CBU_0114 from Coxiella burnetii (strain RSA 493 / Nine Mile phase I).